A 393-amino-acid chain; its full sequence is MGYYSLTEVTAVQYAKEHGYFEKKANVVCHEIGDGNLNYVFKLDDGEKSIIIKQALPYAKVVGESWPLSIKRATIESKALQIFAKYVPEYVPVVYSHDEELAVTVIEDLSRLTITRKGLIDGEEYPLLSQHIGRFLANVLFYTSDFGLQSEEKRVLEGTFVNPDLCKITEDLVFTDPFGHYDTNDYEPELQLTIDELWSDKTLKLKVAQYKYKFLTRKEALIHGDLHTGSIFSSPSETKVIDPEFATYGPFGFDIGQFIANLLLNALSREEEQRGVLFFHIEKTWSYFVETFTKLWIGEGVEAYTKEKQWLPIILQNIFTDAVGFAGCELIRRTIGLAHVADLDEITNKETRIQAKKQALSLGKELIKYESKNADIQLFRTLFQQTVSGGIKA.

ATP contacts are provided by residues asparagine 38, lysine 53, and 107-109 (EDL). Aspartate 225 is a substrate binding site. 242 to 244 (DPE) provides a ligand contact to ATP. Residue arginine 332 participates in substrate binding.

The protein belongs to the methylthioribose kinase family. As to quaternary structure, homodimer.

It carries out the reaction 5-(methylsulfanyl)-D-ribose + ATP = 5-(methylsulfanyl)-alpha-D-ribose 1-phosphate + ADP + H(+). The protein operates within amino-acid biosynthesis; L-methionine biosynthesis via salvage pathway; S-methyl-5-thio-alpha-D-ribose 1-phosphate from S-methyl-5'-thioadenosine (hydrolase route): step 2/2. Its function is as follows. Catalyzes the phosphorylation of methylthioribose into methylthioribose-1-phosphate. In Bacillus anthracis (strain A0248), this protein is Methylthioribose kinase.